Here is a 181-residue protein sequence, read N- to C-terminus: Malignant T-cell-amplified sequence 1-A (181 aa).

The region spanning 92–171 (LPHQQVDKGA…IGIENIHYLN (80 aa)) is the PUA domain.

It belongs to the MCTS1 family.

The protein localises to the cytoplasm. Plays a role as translation enhancer and involved in cell cycle regulation. In Xenopus laevis (African clawed frog), this protein is Malignant T-cell-amplified sequence 1-A (mcts1-a).